The sequence spans 485 residues: Aspartyl/glutamyl-tRNA(Asn/Gln) amidotransferase subunit B (485 aa).

Belongs to the GatB/GatE family. GatB subfamily. Heterotrimer of A, B and C subunits.

The enzyme catalyses L-glutamyl-tRNA(Gln) + L-glutamine + ATP + H2O = L-glutaminyl-tRNA(Gln) + L-glutamate + ADP + phosphate + H(+). It carries out the reaction L-aspartyl-tRNA(Asn) + L-glutamine + ATP + H2O = L-asparaginyl-tRNA(Asn) + L-glutamate + ADP + phosphate + 2 H(+). Its function is as follows. Allows the formation of correctly charged Asn-tRNA(Asn) or Gln-tRNA(Gln) through the transamidation of misacylated Asp-tRNA(Asn) or Glu-tRNA(Gln) in organisms which lack either or both of asparaginyl-tRNA or glutaminyl-tRNA synthetases. The reaction takes place in the presence of glutamine and ATP through an activated phospho-Asp-tRNA(Asn) or phospho-Glu-tRNA(Gln). The chain is Aspartyl/glutamyl-tRNA(Asn/Gln) amidotransferase subunit B from Borrelia hermsii (strain HS1 / DAH).